The primary structure comprises 436 residues: Chorion-specific transcription factor GCMa (436 aa).

Residues 14-169 (LSWDINDVKL…KLEAEARRAM (156 aa)) constitute a DNA-binding region (GCM). Zn(2+) is bound by residues Cys-76, Cys-82, Cys-86, Cys-113, Cys-116, Cys-125, His-152, and His-154. The disordered stretch occupies residues 171-202 (KVNTAPSSVSLSLKGSTETRSLPGETQSQGSL). The segment covering 174-202 (TAPSSVSLSLKGSTETRSLPGETQSQGSL) has biased composition (polar residues).

Polyubiquitinated in the presence of UBE2D2 and FBXW2 (in vitro). In terms of tissue distribution, highly expressed in the placenta. Expressed in trophoblast cells of the villi.

The protein resides in the nucleus. Its function is as follows. Transcription factor involved in the control of expression of placental growth factor (PGF) and other placenta-specific genes. Binds to the trophoblast-specific element 2 (TSE2) of the aromatase gene enhancer. Binds to the SYDE1 promoter. Has a central role in mediating the differentiation of trophoblast cells along both the villous and extravillous pathways in placental development. The polypeptide is Chorion-specific transcription factor GCMa (GCM1) (Homo sapiens (Human)).